Here is an 81-residue protein sequence, read N- to C-terminus: Small ribosomal subunit protein bS18 (81 aa).

Belongs to the bacterial ribosomal protein bS18 family. As to quaternary structure, part of the 30S ribosomal subunit. Forms a tight heterodimer with protein bS6.

In terms of biological role, binds as a heterodimer with protein bS6 to the central domain of the 16S rRNA, where it helps stabilize the platform of the 30S subunit. This is Small ribosomal subunit protein bS18 from Chlamydia muridarum (strain MoPn / Nigg).